The chain runs to 169 residues: Gamma-crystallin 2 (169 aa).

Beta/gamma crystallin 'Greek key' domains follow at residues 1–34 (YEDR…KVDS) and 35–77 (GCWM…KVIP). The tract at residues 78-82 (QQKGP) is connecting peptide. 2 Beta/gamma crystallin 'Greek key' domains span residues 83–123 (HKMK…NVLE) and 124–166 (GHWI…RRVL).

It belongs to the beta/gamma-crystallin family. As to quaternary structure, monomer.

Functionally, crystallins are the dominant structural components of the vertebrate eye lens. The protein is Gamma-crystallin 2 of Rana temporaria (European common frog).